Reading from the N-terminus, the 436-residue chain is MHIVVVGLSHRTAPVEVREKLSIPDQSITESLKALKAFSDVLEVSILSTCNRLEIYALVKDKNTGISSIKEFISEYSGIIFDDLNPHLFCFRQEEAVLHLMKVSAGLDSLVLGEGQILSQVKKMMRLGQENQSTGPILNRLLTQSVSTGKKVRSETNLGTGAVSISSAAVELAQLKIGQEKGFDNLVSLESENVLVVGAGRMSRLLITHLKSKGCHKLILLNRNIDRALNLAQDFPDLEIVCKGLNELEENISLSSLVFTSTASEEPIIDLTKIEKINLSNRLKFIDIGVPRNISNDVKQHEFVKSFDVDDLQEVVSRNQEFRQKIAKEAESLVEEERIIFLEWWASLEAVPVINKLRSDLELIRKEELQKALSRMGPDFSARERKVVEALTKGIINKILHTPVTKLRSPQSREERQVSLKIVEKLFSLVEEDKNN.

Residues 49–52 (TCNR), S109, 114–116 (EGQ), and Q120 contribute to the substrate site. The active-site Nucleophile is the C50. 198 to 203 (GAGRMS) contributes to the NADP(+) binding site.

This sequence belongs to the glutamyl-tRNA reductase family. As to quaternary structure, homodimer.

It carries out the reaction (S)-4-amino-5-oxopentanoate + tRNA(Glu) + NADP(+) = L-glutamyl-tRNA(Glu) + NADPH + H(+). It functions in the pathway porphyrin-containing compound metabolism; protoporphyrin-IX biosynthesis; 5-aminolevulinate from L-glutamyl-tRNA(Glu): step 1/2. The protein operates within porphyrin-containing compound metabolism; chlorophyll biosynthesis. Functionally, catalyzes the NADPH-dependent reduction of glutamyl-tRNA(Glu) to glutamate 1-semialdehyde (GSA). This is Glutamyl-tRNA reductase from Prochlorococcus marinus (strain MIT 9301).